Here is a 493-residue protein sequence, read N- to C-terminus: Probable cytosol aminopeptidase (493 aa).

The Mn(2+) site is built by Lys-262 and Asp-267. Residue Lys-274 is part of the active site. Mn(2+)-binding residues include Asp-286, Asp-345, and Glu-347. The active site involves Arg-349.

Belongs to the peptidase M17 family. Mn(2+) serves as cofactor.

It is found in the cytoplasm. It carries out the reaction Release of an N-terminal amino acid, Xaa-|-Yaa-, in which Xaa is preferably Leu, but may be other amino acids including Pro although not Arg or Lys, and Yaa may be Pro. Amino acid amides and methyl esters are also readily hydrolyzed, but rates on arylamides are exceedingly low.. The catalysed reaction is Release of an N-terminal amino acid, preferentially leucine, but not glutamic or aspartic acids.. In terms of biological role, presumably involved in the processing and regular turnover of intracellular proteins. Catalyzes the removal of unsubstituted N-terminal amino acids from various peptides. This chain is Probable cytosol aminopeptidase, found in Cyanothece sp. (strain PCC 7425 / ATCC 29141).